The sequence spans 288 residues: Release factor glutamine methyltransferase (288 aa).

S-adenosyl-L-methionine is bound by residues Asp142 and Asn186. 186-189 (NPPY) is a binding site for substrate.

It belongs to the protein N5-glutamine methyltransferase family. PrmC subfamily.

The catalysed reaction is L-glutaminyl-[peptide chain release factor] + S-adenosyl-L-methionine = N(5)-methyl-L-glutaminyl-[peptide chain release factor] + S-adenosyl-L-homocysteine + H(+). Functionally, methylates the class 1 translation termination release factors RF1/PrfA and RF2/PrfB on the glutamine residue of the universally conserved GGQ motif. The polypeptide is Release factor glutamine methyltransferase (Mycobacterium leprae (strain TN)).